A 278-amino-acid polypeptide reads, in one-letter code: Ras-related protein rapC (278 aa).

10-17 (GASGTGKT) is a GTP binding site. An Effector region motif is present at residues 32-40 (YDPTIEDLY). GTP-binding positions include 58 to 62 (DTSGT) and 119 to 122 (NKCD). 2 disordered regions span residues 176-209 (NGSS…SSSS) and 236-278 (STSS…CLIM). Composition is skewed to low complexity over residues 198–209 (GSNNSSINSSSS) and 236–251 (STSS…SQTN). The residue at position 275 (Cys275) is a Cysteine methyl ester. Cys275 is lipidated: S-geranylgeranyl cysteine. Residues 276–278 (LIM) constitute a propeptide, removed in mature form.

This sequence belongs to the small GTPase superfamily. Ras family.

The protein localises to the cell membrane. It catalyses the reaction GTP + H2O = GDP + phosphate + H(+). In Dictyostelium discoideum (Social amoeba), this protein is Ras-related protein rapC (rapC).